A 238-amino-acid chain; its full sequence is Probable transcriptional regulatory protein VIBHAR_07036 (238 aa).

The protein belongs to the TACO1 family.

Its subcellular location is the cytoplasm. The chain is Probable transcriptional regulatory protein VIBHAR_07036 from Vibrio campbellii (strain ATCC BAA-1116).